The chain runs to 431 residues: D-inositol 3-phosphate glycosyltransferase (431 aa).

His14 provides a ligand contact to 1D-myo-inositol 3-phosphate. UDP-N-acetyl-alpha-D-glucosamine-binding positions include 20–21 (QP) and Gly28. 1D-myo-inositol 3-phosphate contacts are provided by residues 25–30 (DAGGMN), Lys83, Tyr116, Thr140, and Arg160. 2 residues coordinate UDP-N-acetyl-alpha-D-glucosamine: Arg240 and Lys245. Mg(2+) contacts are provided by Tyr315, Arg316, and Ala318. Residues Glu328 and Glu336 each coordinate UDP-N-acetyl-alpha-D-glucosamine. Position 342 (Thr342) interacts with Mg(2+).

This sequence belongs to the glycosyltransferase group 1 family. MshA subfamily. Homodimer.

The catalysed reaction is 1D-myo-inositol 3-phosphate + UDP-N-acetyl-alpha-D-glucosamine = 1D-myo-inositol 2-acetamido-2-deoxy-alpha-D-glucopyranoside 3-phosphate + UDP + H(+). In terms of biological role, catalyzes the transfer of a N-acetyl-glucosamine moiety to 1D-myo-inositol 3-phosphate to produce 1D-myo-inositol 2-acetamido-2-deoxy-glucopyranoside 3-phosphate in the mycothiol biosynthesis pathway. The sequence is that of D-inositol 3-phosphate glycosyltransferase from Thermomonospora curvata (strain ATCC 19995 / DSM 43183 / JCM 3096 / KCTC 9072 / NBRC 15933 / NCIMB 10081 / Henssen B9).